The chain runs to 263 residues: Uroporphyrinogen-III C-methyltransferase (263 aa).

S-adenosyl-L-homocysteine contacts are provided by residues Pro20, 96–98, 126–127, Met180, and Ala237; these read GGD and TA.

Belongs to the precorrin methyltransferase family.

It catalyses the reaction uroporphyrinogen III + 2 S-adenosyl-L-methionine = precorrin-2 + 2 S-adenosyl-L-homocysteine + H(+). Its pathway is cofactor biosynthesis; adenosylcobalamin biosynthesis; precorrin-2 from uroporphyrinogen III: step 1/1. The protein operates within porphyrin-containing compound metabolism; siroheme biosynthesis; precorrin-2 from uroporphyrinogen III: step 1/1. Catalyzes the two successive C-2 and C-7 methylation reactions involved in the conversion of uroporphyrinogen III to precorrin-2 via the intermediate formation of precorrin-1. It is a step in the biosynthesis of both cobalamin (vitamin B12) and siroheme. This Synechocystis sp. (strain ATCC 27184 / PCC 6803 / Kazusa) protein is Uroporphyrinogen-III C-methyltransferase (cobA).